A 600-amino-acid polypeptide reads, in one-letter code: Aspartate--tRNA(Asp/Asn) ligase (600 aa).

Position 174 (glutamate 174) interacts with L-aspartate. Residues 198–201 form an aspartate region; sequence QLFK. Arginine 220 lines the L-aspartate pocket. ATP-binding positions include 220–222 and glutamine 229; that span reads RDE. Histidine 457 provides a ligand contact to L-aspartate. Glutamate 491 lines the ATP pocket. Residue arginine 498 coordinates L-aspartate. 543 to 546 lines the ATP pocket; sequence GLDR.

This sequence belongs to the class-II aminoacyl-tRNA synthetase family. Type 1 subfamily. Homodimer.

The protein localises to the cytoplasm. It catalyses the reaction tRNA(Asx) + L-aspartate + ATP = L-aspartyl-tRNA(Asx) + AMP + diphosphate. Functionally, aspartyl-tRNA synthetase with relaxed tRNA specificity since it is able to aspartylate not only its cognate tRNA(Asp) but also tRNA(Asn). Reaction proceeds in two steps: L-aspartate is first activated by ATP to form Asp-AMP and then transferred to the acceptor end of tRNA(Asp/Asn). This chain is Aspartate--tRNA(Asp/Asn) ligase, found in Burkholderia orbicola (strain MC0-3).